Consider the following 137-residue polypeptide: 1,4-dihydroxy-2-naphthoyl-CoA hydrolase (137 aa).

The active site involves Asp-12.

This sequence belongs to the 4-hydroxybenzoyl-CoA thioesterase family. DHNA-CoA hydrolase subfamily.

The enzyme catalyses 1,4-dihydroxy-2-naphthoyl-CoA + H2O = 1,4-dihydroxy-2-naphthoate + CoA + H(+). It functions in the pathway cofactor biosynthesis; phylloquinone biosynthesis. Its pathway is quinol/quinone metabolism; 1,4-dihydroxy-2-naphthoate biosynthesis; 1,4-dihydroxy-2-naphthoate from chorismate: step 7/7. In terms of biological role, catalyzes the hydrolysis of 1,4-dihydroxy-2-naphthoyl-CoA (DHNA-CoA) to 1,4-dihydroxy-2-naphthoate (DHNA), a reaction involved in phylloquinone (vitamin K1) biosynthesis. The polypeptide is 1,4-dihydroxy-2-naphthoyl-CoA hydrolase (Acaryochloris marina (strain MBIC 11017)).